A 517-amino-acid chain; its full sequence is MHHSFLSANGGIVVSKQTSHGLRLKHLGIKTYHEAIIYMREDCHVCHSEGFEVQTRIQVTLGQRSIIATLNVVTSELLQPGEAGLSDYAWESLHAKEGDEIQVSHPKPLESLSYVHTKIYGKELSYEQMKVIIDDVLSGRLSDVQISAFLAASSAGRLTRTEIMKLTKAMIDSGDRLSWSSPLVVDKHCVGGLPGNRTTLIVVPIVAAFGLMIPKTSSRAITSPAGTADTMETLAPVHLSPQKMRQVVEQENGCIVWGGAVSLSPADDVLIRVERAIDLDSEGQLVASILSKKIATGATHAVIDIPVGPTAKVRNQSMALLLKQLLEEVGNELGLVVRTLLTDGSQPVGHGIGPSLEARDVMAVLQGLPDAPNDLRERALTLAGAALECSSKVPPGLGKSIATQLLDSGQAFKKFQAICEAQGGMRELTKARFTYPVVAAKAGKVSLIDNRKLAKIAKLAGAPKSKSAGIDLHSHVGESVEKGEPLFTIHSESSGELHYACDLLRDKQDIIILGENS.

This sequence belongs to the thymidine/pyrimidine-nucleoside phosphorylase family. Type 2 subfamily.

The catalysed reaction is thymidine + phosphate = 2-deoxy-alpha-D-ribose 1-phosphate + thymine. The protein is Putative thymidine phosphorylase of Legionella pneumophila (strain Paris).